The sequence spans 543 residues: Hydroxylamine reductase (543 aa).

Residues cysteine 5, cysteine 8, cysteine 17, and cysteine 23 each contribute to the [4Fe-4S] cluster site. Histidine 250, glutamate 274, cysteine 318, cysteine 410, cysteine 438, cysteine 463, glutamate 498, and lysine 500 together coordinate hybrid [4Fe-2O-2S] cluster. Cysteine persulfide is present on cysteine 410.

It belongs to the HCP family. It depends on [4Fe-4S] cluster as a cofactor. Requires hybrid [4Fe-2O-2S] cluster as cofactor.

The protein localises to the cytoplasm. It catalyses the reaction A + NH4(+) + H2O = hydroxylamine + AH2 + H(+). In terms of biological role, catalyzes the reduction of hydroxylamine to form NH(3) and H(2)O. The sequence is that of Hydroxylamine reductase from Petrotoga mobilis (strain DSM 10674 / SJ95).